Reading from the N-terminus, the 154-residue chain is Protein X (154 aa).

The tract at residues 68–117 (PCALRFTSARRMETTVNAHQFLPKVLHKRTLGLSAMSTTDLEAYFKDCLF) is mitochondrial targeting sequence.

Belongs to the orthohepadnavirus protein X family. May form homodimer. May interact with host CEBPA, CFLAR, CREB1, DDB1, E4F1, HBXIP, HSPD1/HSP60, NFKBIA, POLR2E and SMAD4. Interacts with host SMC5-SMC6 complex and induces its degradation. Interacts with host TRPC4AP; leading to prevent ubiquitination of TRPC4AP. Interacts with host PLSCR1; this interaction promotes ubiquitination and degradation of HBx and impairs HBx-mediated cell proliferation. A fraction may be phosphorylated in insect cells and HepG2 cells, a human hepatoblastoma cell line. Phosphorylated in vitro by host protein kinase C or mitogen-activated protein kinase. N-acetylated in insect cells.

It is found in the host cytoplasm. The protein resides in the host nucleus. The protein localises to the host mitochondrion. Its function is as follows. Multifunctional protein that plays a role in silencing host antiviral defenses and promoting viral transcription. Does not seem to be essential for HBV infection. May be directly involved in development of cirrhosis and liver cancer (hepatocellular carcinoma). Most of cytosolic activities involve modulation of cytosolic calcium. The effect on apoptosis is controversial depending on the cell types in which the studies have been conducted. May induce apoptosis by localizing in mitochondria and causing loss of mitochondrial membrane potential. May also modulate apoptosis by binding host CFLAR, a key regulator of the death-inducing signaling complex (DISC). Promotes viral transcription by using the host E3 ubiquitin ligase DDB1 to target the SMC5-SMC6 complex to proteasomal degradation. This host complex would otherwise bind to viral episomal DNA, and prevents its transcription. Moderately stimulates transcription of many different viral and cellular transcription elements. Promoters and enhancers stimulated by HBx contain DNA binding sites for NF-kappa-B, AP-1, AP-2, c-EBP, ATF/CREB, or the calcium-activated factor NF-AT. The sequence is that of Protein X from Homo sapiens (Human).